Consider the following 181-residue polypeptide: ATP synthase subunit delta (181 aa).

It belongs to the ATPase delta chain family. As to quaternary structure, F-type ATPases have 2 components, F(1) - the catalytic core - and F(0) - the membrane proton channel. F(1) has five subunits: alpha(3), beta(3), gamma(1), delta(1), epsilon(1). F(0) has three main subunits: a(1), b(2) and c(10-14). The alpha and beta chains form an alternating ring which encloses part of the gamma chain. F(1) is attached to F(0) by a central stalk formed by the gamma and epsilon chains, while a peripheral stalk is formed by the delta and b chains.

It localises to the cell membrane. Functionally, f(1)F(0) ATP synthase produces ATP from ADP in the presence of a proton or sodium gradient. F-type ATPases consist of two structural domains, F(1) containing the extramembraneous catalytic core and F(0) containing the membrane proton channel, linked together by a central stalk and a peripheral stalk. During catalysis, ATP synthesis in the catalytic domain of F(1) is coupled via a rotary mechanism of the central stalk subunits to proton translocation. Its function is as follows. This protein is part of the stalk that links CF(0) to CF(1). It either transmits conformational changes from CF(0) to CF(1) or is implicated in proton conduction. This is ATP synthase subunit delta from Lacticaseibacillus paracasei (strain ATCC 334 / BCRC 17002 / CCUG 31169 / CIP 107868 / KCTC 3260 / NRRL B-441) (Lactobacillus paracasei).